A 228-amino-acid chain; its full sequence is Small ribosomal subunit protein uS3 (228 aa).

In terms of domain architecture, KH type-2 spans 39–107 (TREYLQDKLK…PVHINIEEIR (69 aa)).

Belongs to the universal ribosomal protein uS3 family. As to quaternary structure, part of the 30S ribosomal subunit. Forms a tight complex with proteins S10 and S14.

Binds the lower part of the 30S subunit head. Binds mRNA in the 70S ribosome, positioning it for translation. This is Small ribosomal subunit protein uS3 from Pseudomonas putida (strain ATCC 700007 / DSM 6899 / JCM 31910 / BCRC 17059 / LMG 24140 / F1).